Consider the following 147-residue polypeptide: Large ribosomal subunit protein uL13 (147 aa).

Belongs to the universal ribosomal protein uL13 family. Part of the 50S ribosomal subunit.

Functionally, this protein is one of the early assembly proteins of the 50S ribosomal subunit, although it is not seen to bind rRNA by itself. It is important during the early stages of 50S assembly. This is Large ribosomal subunit protein uL13 from Arthrobacter sp. (strain FB24).